The chain runs to 228 residues: UPF0173 metal-dependent hydrolase ABC2731 (228 aa).

This sequence belongs to the UPF0173 family.

The chain is UPF0173 metal-dependent hydrolase ABC2731 from Shouchella clausii (strain KSM-K16) (Alkalihalobacillus clausii).